We begin with the raw amino-acid sequence, 452 residues long: Phosphoglucosamine mutase (452 aa).

The Phosphoserine intermediate role is filled by Ser101. Positions 101, 241, 243, and 245 each coordinate Mg(2+). At Ser101 the chain carries Phosphoserine.

Belongs to the phosphohexose mutase family. Requires Mg(2+) as cofactor. Post-translationally, activated by phosphorylation.

It carries out the reaction alpha-D-glucosamine 1-phosphate = D-glucosamine 6-phosphate. Catalyzes the conversion of glucosamine-6-phosphate to glucosamine-1-phosphate. In Lactococcus lactis subsp. cremoris (strain SK11), this protein is Phosphoglucosamine mutase.